The sequence spans 1123 residues: Ubiquitin carboxyl-terminal hydrolase 36 (1123 aa).

Basic and acidic residues-rich tracts occupy residues 1 to 19 (MPIV…KDSA) and 69 to 90 (GASR…EHTY). Disordered stretches follow at residues 1 to 22 (MPIV…ADDG) and 67 to 95 (TEGA…SCGD). In terms of domain architecture, USP spans 122–423 (AGLHNLGNTC…QAYVLFYLRI (302 aa)). Catalysis depends on Cys131, which acts as the Nucleophile. His382 acts as the Proton acceptor in catalysis. Ser429 and Ser464 each carry phosphoserine. The segment at 430–577 (PEGLISRTGS…RQGSWDSRDV (148 aa)) is disordered. The span at 491-503 (RNGSTLGLKSQNG) shows a compositional bias: polar residues. Residues 510–519 (PSGSPSPKLS) show a composition bias toward low complexity. A Phosphoserine modification is found at Ser546. Residues 557 to 571 (SNSNSSRSGSQRQGS) are compositionally biased toward low complexity. Ser582 is modified (phosphoserine). The tract at residues 589–999 (ATANGHGLKG…ESSSCAPSAN (411 aa)) is disordered. The span at 597–609 (KGNDESAGLDRRG) shows a compositional bias: basic and acidic residues. Low complexity predominate over residues 610–623 (SSSSSPEHSASSDS). Over residues 640–654 (SQETNCSTAGHSKTP) the composition is skewed to polar residues. Ser667 is modified (phosphoserine). Over residues 669 to 681 (VLSNTTTEPASTM) the composition is skewed to polar residues. Ser682 bears the Phosphoserine mark. The segment covering 687-697 (KKLALSAKKAS) has biased composition (low complexity). Ser713 and Ser742 each carry phosphoserine. The span at 773–785 (EPRSCSSISTALP) shows a compositional bias: polar residues. Residues 841–850 (HGKRKRKKKK) are compositionally biased toward basic residues. Polar residues predominate over residues 891–902 (GTQPQVNGQQVG). Ser952 bears the Phosphoserine mark. Basic and acidic residues predominate over residues 963 to 975 (QETQRAVEEDGHL).

The protein belongs to the peptidase C19 family. Interacts with isoform 3 of FBXW7; the interaction inhibits MYC degradation induced by SCF(FBW7) complex. Interacts with NTRK1; USP36 does not deubiquitinate NTRK1. Interacts with NEDD4L (via domains WW1, 3 and 4); the interaction inhibits ubiquitination of, at least, NTRK1, KCNQ2 and KCNQ3 by NEDD4L. Interacts (via C-terminus) with EXOSC10 (via C-terminus); the interaction is facilitated by the association with RNA and promotes sumoylation of EXOSC10. Post-translationally, polyubiquitinated by NEDD4L, no effect on USP36 protein levels. Both proteins interact with and regulate each other's ubiquitination levels. As to expression, broadly expressed.

The protein localises to the nucleus. The protein resides in the nucleolus. It is found in the cytoplasm. It carries out the reaction Thiol-dependent hydrolysis of ester, thioester, amide, peptide and isopeptide bonds formed by the C-terminal Gly of ubiquitin (a 76-residue protein attached to proteins as an intracellular targeting signal).. Functionally, deubiquitinase essential for the regulation of nucleolar structure and function. Required for cell and organism viability. Plays an important role in ribosomal RNA processing and protein synthesis, which is mediated, at least in part, through deubiquitination of DHX33, NPM1 and FBL, regulating their protein stability. Functions as a transcriptional repressor by deubiquiting histone H2B at the promoters of genes critical for cellular differentiation, such as CDKN1A, thereby preventing histone H3 'Lys-4' trimethylation (H3K4). Specifically deubiquitinates MYC in the nucleolus, leading to prevent MYC degradation by the proteasome: acts by specifically interacting with isoform 3 of FBXW7 (FBW7gamma) in the nucleolus and counteracting ubiquitination of MYC by the SCF(FBW7) complex. In contrast, it does not interact with isoform 1 of FBXW7 (FBW7alpha) in the nucleoplasm. Interacts to and regulates the actions of E3 ubiquitin-protein ligase NEDD4L over substrates such as NTRK1, KCNQ2 and KCNQ3, affecting their expression an functions. Deubiquitinates SOD2, regulates SOD2 protein stability. Deubiquitinase activity is required to control selective autophagy activation by ubiquitinated proteins. Promotes CEP63 stabilization through 'Lys-48'-linked deubiquitination leading to increased stability. Acts as a SUMO ligase to promote EXOSC10 sumoylation critical for the nucleolar RNA exosome function in rRNA processing. Binds to pre-rRNAs. In Homo sapiens (Human), this protein is Ubiquitin carboxyl-terminal hydrolase 36.